The primary structure comprises 254 residues: Alcohol dehydrogenase (254 aa).

Residue 10–33 (FVAGLGGIGLDTSREIVKSGPKNL) coordinates NAD(+). S138 provides a ligand contact to substrate. Y151 serves as the catalytic Proton acceptor.

The protein belongs to the short-chain dehydrogenases/reductases (SDR) family. In terms of assembly, homodimer.

The catalysed reaction is a primary alcohol + NAD(+) = an aldehyde + NADH + H(+). It catalyses the reaction a secondary alcohol + NAD(+) = a ketone + NADH + H(+). In Drosophila grimshawi (Hawaiian fruit fly), this protein is Alcohol dehydrogenase (Adh).